The following is a 324-amino-acid chain: MSERNAASARTVACLLGPTASGKTAAALALAARRPIEIVSVDSALVYRGMDIGTAKPTRDERAAVPHHLIDIVDPADAYSAAEFRADALRLVAQIAARGRTPLLAGGTMLYYRALTQGLNDLPAADPDVRATLDADAARDGWPALHARLAGIDPATAARLAPNDSQRIQRALEVYLLTGQPMSALLAAPPRDNDAAAGLRFVPVALEPSERAVLHARIAARFDAMLEAGFIDEVERLRRRDDLHLGLPSMRCVGYRQAWEYLDGCTDYRTMRDKGIFATRQLCKRQLTWLRAMPERIVVDCCAPDATVRAVDALERVLDGRAPA.

17–24 (GPTASGKT) is a binding site for ATP. Position 19 to 24 (19 to 24 (TASGKT)) interacts with substrate. Interaction with substrate tRNA stretches follow at residues 42–45 (DSAL), 166–170 (QRIQR), and 251–256 (RCVGYR).

This sequence belongs to the IPP transferase family. In terms of assembly, monomer. The cofactor is Mg(2+).

It catalyses the reaction adenosine(37) in tRNA + dimethylallyl diphosphate = N(6)-dimethylallyladenosine(37) in tRNA + diphosphate. Catalyzes the transfer of a dimethylallyl group onto the adenine at position 37 in tRNAs that read codons beginning with uridine, leading to the formation of N6-(dimethylallyl)adenosine (i(6)A). This chain is tRNA dimethylallyltransferase, found in Burkholderia mallei (strain NCTC 10247).